The chain runs to 1390 residues: ATPase family AAA domain-containing protein 2 (1390 aa).

The tract at residues 40–63 is disordered; it reads RSAGAAQKKPAATTAKAGDGSSVK. The span at 42–57 shows a compositional bias: low complexity; the sequence is AGAAQKKPAATTAKAG. 2 positions are modified to phosphoserine: S60 and S61. K125 participates in a covalent cross-link: Glycyl lysine isopeptide (Lys-Gly) (interchain with G-Cter in SUMO2). A phosphoserine mark is found at S165 and S170. The disordered stretch occupies residues 216 to 380; sequence LNMYTRGKQK…HFERRRKRSR (165 aa). Residues 223–232 are compositionally biased toward basic and acidic residues; sequence KQKDIQRTDE. Acidic residues predominate over residues 244–288; the sequence is SSEEGEDQEHEDDGEDEDDEDDDDDDDDDDDDDDEDDEDEEDGEE. Residue K317 forms a Glycyl lysine isopeptide (Lys-Gly) (interchain with G-Cter in SUMO2) linkage. Phosphoserine is present on residues S327, S337, S342, and S410. 467-474 contributes to the ATP binding site; sequence GPPGTGKT. 2 positions are modified to phosphoserine: S746 and S751. 2 coiled-coil regions span residues 970–994 and 1086–1112; these read LTAEEVKRLEEQEEDTFRELRIFLR and YAIIKEELDEDFEQLCEEIQESRKKRG. Residues 980 to 1092 enclose the Bromo domain; that stretch reads EQEEDTFREL…DTAYAIIKEE (113 aa). The tract at residues 1124 to 1163 is disordered; it reads HVMPKQNSTLVGDKRSDPEQNEKLKTPSTPVACSTPAQLK. K1128 is covalently cross-linked (Glycyl lysine isopeptide (Lys-Gly) (interchain with G-Cter in SUMO2)). The segment covering 1135-1148 has biased composition (basic and acidic residues); sequence GDKRSDPEQNEKLK. Residue S1139 is modified to Phosphoserine. K1148 participates in a covalent cross-link: Glycyl lysine isopeptide (Lys-Gly) (interchain with G-Cter in SUMO2). A phosphothreonine mark is found at T1149, T1152, and T1176. The span at 1149 to 1160 shows a compositional bias: polar residues; the sequence is TPSTPVACSTPA. Positions 1181 to 1242 are disordered; the sequence is RKISQAKDDS…SESKLELRNN (62 aa). Over residues 1185–1200 the composition is skewed to basic and acidic residues; it reads QAKDDSQNAIDHKIES. A phosphoserine mark is found at S1200, S1233, and S1235. The segment covering 1229–1242 has biased composition (polar residues); it reads QQNASESKLELRNN. K1236 participates in a covalent cross-link: Glycyl lysine isopeptide (Lys-Gly) (interchain with G-Cter in SUMO2). Phosphoserine occurs at positions 1243 and 1302. Residue T1323 is modified to Phosphothreonine.

Belongs to the AAA ATPase family. In terms of assembly, interacts with ESR1 and NCOA3 and these interactions are enhanced by estradiol. Interacts with acetylated lysine residues on histone H1.4, H2A, H2B and H3 (in vitro). Highly expressed in estrogen receptor positive breast tumors and in osteosarcoma tumors.

The protein localises to the nucleus. The enzyme catalyses ATP + H2O = ADP + phosphate + H(+). Its function is as follows. May be a transcriptional coactivator of the nuclear receptor ESR1 required to induce the expression of a subset of estradiol target genes, such as CCND1, MYC and E2F1. May play a role in the recruitment or occupancy of CREBBP at some ESR1 target gene promoters. May be required for histone hyperacetylation. Involved in the estrogen-induced cell proliferation and cell cycle progression of breast cancer cells. The chain is ATPase family AAA domain-containing protein 2 (ATAD2) from Homo sapiens (Human).